Consider the following 197-residue polypeptide: Phospholipid hydroperoxide glutathione peroxidase (197 aa).

Ser40 is subject to Phosphoserine. Residue Sec73 is part of the active site. A non-standard amino acid (selenocysteine) is located at residue Sec73.

It belongs to the glutathione peroxidase family. As to quaternary structure, monomer. Has a tendency to form higher mass oligomers. Interacts with FUNDC1; this interaction promotes GPX4 recruitment into mitochondria through TOM/TIM complex where it is degraded by mitophagy.

The protein localises to the mitochondrion. It is found in the cytoplasm. The enzyme catalyses a hydroperoxy polyunsaturated fatty acid + 2 glutathione = a hydroxy polyunsaturated fatty acid + glutathione disulfide + H2O. The catalysed reaction is 2 glutathione + H2O2 = glutathione disulfide + 2 H2O. It catalyses the reaction tert-butyl hydroperoxide + 2 glutathione = tert-butanol + glutathione disulfide + H2O. It carries out the reaction cumene hydroperoxide + 2 glutathione = 2-phenylpropan-2-ol + glutathione disulfide + H2O. The enzyme catalyses (9S)-hydroperoxy-(10E,12Z)-octadecadienoate + 2 glutathione = (9S)-hydroxy-(10E,12Z)-octadecadienoate + glutathione disulfide + H2O. The catalysed reaction is (13S)-hydroperoxy-(9Z,11E)-octadecadienoate + 2 glutathione = (13S)-hydroxy-(9Z,11E)-octadecadienoate + glutathione disulfide + H2O. It catalyses the reaction (5S)-hydroperoxy-(6E,8Z,11Z,14Z)-eicosatetraenoate + 2 glutathione = (5S)-hydroxy-(6E,8Z,11Z,14Z)-eicosatetraenoate + glutathione disulfide + H2O. It carries out the reaction (12R)-hydroperoxy-(5Z,8Z,10E,14Z)-eicosatetraenoate + 2 glutathione = (12R)-hydroxy-(5Z,8Z,10E,14Z)-eicosatetraenoate + glutathione disulfide + H2O. The enzyme catalyses (12S)-hydroperoxy-(5Z,8Z,10E,14Z)-eicosatetraenoate + 2 glutathione = (12S)-hydroxy-(5Z,8Z,10E,14Z)-eicosatetraenoate + glutathione disulfide + H2O. The catalysed reaction is (15S)-hydroperoxy-(5Z,8Z,11Z,13E)-eicosatetraenoate + 2 glutathione = (15S)-hydroxy-(5Z,8Z,11Z,13E)-eicosatetraenoate + glutathione disulfide + H2O. It catalyses the reaction (5S)-hydroperoxy-(6E,8Z,11Z,14Z,17Z)-eicosapentaenoate + 2 glutathione = (5S)-hydroxy-(6E,8Z,11Z,14Z,17Z)-eicosapentaenoate + glutathione disulfide + H2O. It carries out the reaction (12S)-hydroperoxy-(5Z,8Z,10E,14Z,17Z)-eicosapentaenoate + 2 glutathione = (12S)-hydroxy-(5Z,8Z,10E,14Z,17Z)-eicosapentaenoate + glutathione disulfide + H2O. The enzyme catalyses (15S)-hydroperoxy-(5Z,8Z,11Z,13E,17Z)-eicosapentaenoate + 2 glutathione = (15S)-hydroxy-(5Z,8Z,11Z,13E,17Z)-eicosapentaenoate + glutathione disulfide + H2O. The catalysed reaction is (15S)-hydroperoxy-(11Z,13E)-eicosadienoate + 2 glutathione = (15S)-hydroxy-(11Z,13E)-eicosadienoate + glutathione disulfide + H2O. It catalyses the reaction (17S)-hydroperoxy-(4Z,7Z,10Z,13Z,15E,19Z)-docosahexaenoate + 2 glutathione = (17S)-hydroxy-(4Z,7Z,10Z,13Z,15E,19Z)-docosahexaenoate + glutathione disulfide + H2O. It carries out the reaction a hydroperoxy-1,2-diacyl-glycero-3-phosphocholine + 2 glutathione = a hydroxy-1,2-diacyl-glycero-3-phosphocholine + glutathione disulfide + H2O. In terms of biological role, essential antioxidant peroxidase that directly reduces phospholipid hydroperoxide even if they are incorporated in membranes and lipoproteins. Can also reduce fatty acid hydroperoxide, cholesterol hydroperoxide and thymine hydroperoxide. Plays a key role in protecting cells from oxidative damage by preventing membrane lipid peroxidation. Required to prevent cells from ferroptosis, a non-apoptotic cell death resulting from an iron-dependent accumulation of lipid reactive oxygen species. The presence of selenocysteine (Sec) versus Cys at the active site is essential for life: it provides resistance to overoxidation and prevents cells against ferroptosis. The presence of Sec at the active site is also essential for the survival of a specific type of parvalbumin-positive interneurons, thereby preventing against fatal epileptic seizures. May be required to protect cells from the toxicity of ingested lipid hydroperoxides. Required for normal sperm development and male fertility. Essential for maturation and survival of photoreceptor cells. Plays a role in a primary T-cell response to viral and parasitic infection by protecting T-cells from ferroptosis and by supporting T-cell expansion. Plays a role of glutathione peroxidase in platelets in the arachidonic acid metabolism. Reduces hydroperoxy ester lipids formed by a 15-lipoxygenase that may play a role as down-regulator of the cellular 15-lipoxygenase pathway. Can also reduce small soluble hydroperoxides such as H2O2, cumene hydroperoxide and tert-butyl hydroperoxide. This chain is Phospholipid hydroperoxide glutathione peroxidase, found in Pongo pygmaeus (Bornean orangutan).